Reading from the N-terminus, the 141-residue chain is Small ribosomal subunit protein bS6 (141 aa).

Positions 96–141 are disordered; the sequence is VTGQSEMLKAEENRSERRERRERPEHADSAEGDDSNDSDSSDNADE. The segment covering 103–124 has biased composition (basic and acidic residues); it reads LKAEENRSERRERRERPEHADS. The segment covering 125-141 has biased composition (acidic residues); sequence AEGDDSNDSDSSDNADE.

The protein belongs to the bacterial ribosomal protein bS6 family.

Binds together with bS18 to 16S ribosomal RNA. The chain is Small ribosomal subunit protein bS6 from Pseudomonas putida (strain ATCC 700007 / DSM 6899 / JCM 31910 / BCRC 17059 / LMG 24140 / F1).